Consider the following 175-residue polypeptide: Inorganic pyrophosphatase (175 aa).

3 residues coordinate substrate: Lys30, Arg44, and Tyr56. Residues Asp66, Asp71, and Asp103 each contribute to the Mg(2+) site. A substrate-binding site is contributed by Tyr140.

Belongs to the PPase family. As to quaternary structure, homohexamer. It depends on Mg(2+) as a cofactor.

The protein resides in the cytoplasm. The enzyme catalyses diphosphate + H2O = 2 phosphate + H(+). In terms of biological role, catalyzes the hydrolysis of inorganic pyrophosphate (PPi) forming two phosphate ions. This Thermus thermophilus (strain ATCC 27634 / DSM 579 / HB8) protein is Inorganic pyrophosphatase.